A 790-amino-acid polypeptide reads, in one-letter code: Centrosomal protein of 78 kDa (790 aa).

Disordered regions lie at residues 325–345 (YQWV…QRKK), 362–385 (GLAT…YAPN), 428–462 (VTVT…IKEE), 654–732 (AKTG…LNEP), and 756–790 (KTIK…AHLT). Phosphoserine occurs at positions 330 and 332. Residues 428–438 (VTVTVESPSSS) are compositionally biased toward low complexity. The stretch at 455–510 (QKTSIKEETLQEKLEECLRQLKEERVIRLKADKRVSELEHENAQLRNINFSLSEAL) forms a coiled coil. 2 stretches are compositionally biased toward basic and acidic residues: residues 693-708 (PSRR…KDLL) and 721-732 (GPGDRRSLLNEP).

Belongs to the CEP78 family. Interacts with PLK4. Interacts with FAM161A. Interacts with IFT20; regulating IFT20 stability and localization. Interacts with TTC21A; regulating TTC21A stability and localization. Interacts with USP16; promoting USP16-dependent deubiquitination of tektins. Interacts with DCAF1/VPRBP; promoting localization of the EDVP complex to centrosomes. Interacts with CEP350; promoting CEP78 localization to centrosome and centriole. In terms of tissue distribution, expressed by photoreceptor cells in the retina.

The protein resides in the cytoplasm. It localises to the cytoskeleton. It is found in the microtubule organizing center. The protein localises to the centrosome. Its subcellular location is the centriole. The protein resides in the cilium basal body. Its function is as follows. Centriole wall protein that localizes to mature centrioles and regulates centriole and cilia biogenesis. Involved in centrosome duplication: required for efficient PLK4 centrosomal localization and PLK4-induced overduplication of centrioles. Involved in cilium biogenesis and controls cilium length. Acts as a regulator of protein stability by preventing ubiquitination of centrosomal proteins, such as CCP110 and tektins. Associates with the EDVP complex, preventing ubiquitination and degradation of CCP110. Promotes deubiquitination of tektin proteins (TEKT1, TEKT2, TEK3, TEKT4 and TEKT5) via its interaction with USP16. The polypeptide is Centrosomal protein of 78 kDa (Mus musculus (Mouse)).